The primary structure comprises 898 residues: MTSRKRSPHDFIFKEELGHGSYSTVFKALDKKSPNKIYAIKVCSKKHIIKEAKVKYVTIEKNTMNLLAQKHHAGIIKLYYTFHDEENLYFVLDFAPGGELLSLLHKMGTFNDIWTRHFTAQLIDALEFIHSHGIIHRDLKPENVLLDRDGRLMITDFGAAATIDPSLSGDSAKFNSDSNGSKDNQNCASFVGTAEYVSPELLLYNQCGYGSDIWALGCMIYQFVQGQPPFRGENELKTFEKIVALDYPWGPNNRINNSTSPINPLVINLVQKILVIEVNERISLEQIKRHPYFSKVDWNDKIKIWRGIWQSQGQSLQQTTLGLPNIPQNILPTRQLHVIDTPARSIQITKQKRKKPTKISNTTSSIVVWRKRLGISTGKDDLGTVPSTTPAVTAPNDTNVLTNTAAHSTANIALPPNSQSNQVKRAQLVAPNRIPPKVPVINDNVRNKSIPRTKPNVPPLQTSSIPQKLSTSSASSALSAPSTEIRNQDLTHTLDGRNSIDIHVLKQDYVFIYGIPYEHEGPAMSLNSYNKIDNDLITSLVAQHKEELKNSESFLQVLTLKKSGMLSYKNTVMEGNDDQENKEHQMANIEDTDLSMYDFEFNELTRKGFLILEKYKNRIWFISLPSYSTLSKIPFNAVKSSTINNNENWVDCFFRARQLLEEKQILDKISNVSFDSKASSEPSSPPPISRKERPLSIGNNVTTLSYTAKNGSQNNAPQNDNVGEEKPFRIPSSTKDRPGANSTPSSRHPRVLSSNNAGETPKKMNGRLPNSAPSTNTYTNGSVPAFNHRPSTNVGNNKHNILTSKKQGSSVFSPSSSTTKPQIKTTGYRQPTPSPPLPQMEFPTTREKYSAPSNMVISSSRYEVLHTLNNSQTNFDREIASRGASAAFRSLQKSKKKK.

The Protein kinase domain maps to 11-293 (FIFKEELGHG…LEQIKRHPYF (283 aa)). ATP-binding positions include 17 to 25 (LGHGSYSTV) and K41. D138 acts as the Proton acceptor in catalysis. 2 disordered regions span residues 435–484 (PPKV…PSTE) and 675–850 (DSKA…EKYS). Positions 459–468 (PLQTSSIPQK) are enriched in polar residues. Low complexity predominate over residues 469–483 (LSTSSASSALSAPST). S696 is subject to Phosphoserine. Positions 697–721 (IGNNVTTLSYTAKNGSQNNAPQNDN) are enriched in polar residues. A compositionally biased stretch (basic and acidic residues) spans 723 to 738 (GEEKPFRIPSSTKDRP). Polar residues-rich tracts occupy residues 740–758 (ANSTPSSRHPRVLSSNNAG), 771–782 (SAPSTNTYTNGS), and 789–803 (RPSTNVGNNKHNILT). S753 is modified (phosphoserine). Low complexity predominate over residues 804-817 (SKKQGSSVFSPSSS). Residues 818–831 (TTKPQIKTTGYRQP) show a composition bias toward polar residues. Position 871 is a phosphoserine (S871).

This sequence belongs to the protein kinase superfamily. Ser/Thr protein kinase family.

It carries out the reaction L-seryl-[protein] + ATP = O-phospho-L-seryl-[protein] + ADP + H(+). The enzyme catalyses L-threonyl-[protein] + ATP = O-phospho-L-threonyl-[protein] + ADP + H(+). Serine/threonine-protein kinase which may phosphorylate the same targets substrates as PKH1 and PKH2, 2 upstream activators of PKC1. This is Serine/threonine-protein kinase PKH3 (PKH3) from Saccharomyces cerevisiae (strain ATCC 204508 / S288c) (Baker's yeast).